The following is a 144-amino-acid chain: Angiogenin-4 (144 aa).

The N-terminal stretch at 1–24 (MTMSPCPLLLVFVLGLVVIPPTLA) is a signal peptide. The active-site Proton acceptor is H36. Intrachain disulfides connect C49-C103, C62-C114, and C80-C129. The Nucleolar localization signal motif lies at 54–58 (KERKL). H136 serves as the catalytic Proton donor.

This sequence belongs to the pancreatic ribonuclease family. In terms of tissue distribution, detected in small intestine, caecum and colon, with the highest expression in Paneth cells in the intestinal epithelium.

Its subcellular location is the secreted. The protein resides in the cytoplasmic vesicle. It localises to the secretory vesicle lumen. It is found in the nucleus. The protein localises to the nucleolus. In terms of biological role, has bactericidal activity against E.faecalis and L.monocytogenes, but not against L.innocua and E.coli. Promotes angiogenesis (in vitro). Has low ribonuclease activity (in vitro). Promotes proliferation of melanoma cells, but not of endothelial cells or fibroblasts (in vitro). This Mus musculus (Mouse) protein is Angiogenin-4 (Ang4).